Here is a 431-residue protein sequence, read N- to C-terminus: Tol-Pal system protein TolB (431 aa).

A signal peptide spans 1–26; the sequence is MSLMTKLGFRALVASCLITAGSAANA. Positions 406–431 are disordered; the sequence is DGSAPPQILSVQGGSVREPSWGPFMQ.

The protein belongs to the TolB family. The Tol-Pal system is composed of five core proteins: the inner membrane proteins TolA, TolQ and TolR, the periplasmic protein TolB and the outer membrane protein Pal. They form a network linking the inner and outer membranes and the peptidoglycan layer.

Its subcellular location is the periplasm. Part of the Tol-Pal system, which plays a role in outer membrane invagination during cell division and is important for maintaining outer membrane integrity. This is Tol-Pal system protein TolB from Burkholderia orbicola (strain MC0-3).